The chain runs to 250 residues: MHILLANDDGYLAPGLAVLHAALAPLGRITVIAPEQNHSGASNSLTLQRPLSIYEAREGVQKGFRFVNGTPTDCVHIALTGLLEEKPDLVVSGINQGQNMGEDVLYSGTVAAAIEGYLLGIPSVAFSQVDKGWEHLDAAARVARTVVERIIGTPPAEPFLLNVNIPNLPFEHIKGYRATRLGKRHPSQPVITQVNPRGDTNYWIGPAGDARDASEGTDFHAAAAGYVSLTPLQLDLTHRGQLDALDQWLK.

Residues Asp-8, Asp-9, Ser-39, and Asn-95 each contribute to the a divalent metal cation site.

The protein belongs to the SurE nucleotidase family. A divalent metal cation serves as cofactor.

It localises to the cytoplasm. It catalyses the reaction a ribonucleoside 5'-phosphate + H2O = a ribonucleoside + phosphate. Its function is as follows. Nucleotidase that shows phosphatase activity on nucleoside 5'-monophosphates. The protein is 5'-nucleotidase SurE of Cupriavidus necator (strain ATCC 17699 / DSM 428 / KCTC 22496 / NCIMB 10442 / H16 / Stanier 337) (Ralstonia eutropha).